The chain runs to 427 residues: UPF0597 protein CPR_0790 (427 aa).

Belongs to the UPF0597 family.

The chain is UPF0597 protein CPR_0790 from Clostridium perfringens (strain SM101 / Type A).